The chain runs to 282 residues: 4-diphosphocytidyl-2-C-methyl-D-erythritol kinase (282 aa).

Residue K9 is part of the active site. An ATP-binding site is contributed by 98 to 108; the sequence is PMGGGLGGGSS. D140 is a catalytic residue.

Belongs to the GHMP kinase family. IspE subfamily. In terms of assembly, homodimer.

It carries out the reaction 4-CDP-2-C-methyl-D-erythritol + ATP = 4-CDP-2-C-methyl-D-erythritol 2-phosphate + ADP + H(+). It participates in isoprenoid biosynthesis; isopentenyl diphosphate biosynthesis via DXP pathway; isopentenyl diphosphate from 1-deoxy-D-xylulose 5-phosphate: step 3/6. Functionally, catalyzes the phosphorylation of the position 2 hydroxy group of 4-diphosphocytidyl-2C-methyl-D-erythritol. The protein is 4-diphosphocytidyl-2-C-methyl-D-erythritol kinase of Salmonella agona (strain SL483).